Here is a 943-residue protein sequence, read N- to C-terminus: Isoleucine--tRNA ligase 1 (943 aa).

Positions 58-68 (PYANGTIHIGH) match the 'HIGH' region motif. E567 contacts L-isoleucyl-5'-AMP. The short motif at 608 to 612 (KMSKS) is the 'KMSKS' region element. ATP is bound at residue K611. Residues C906, C909, C926, and C929 each contribute to the Zn(2+) site.

This sequence belongs to the class-I aminoacyl-tRNA synthetase family. IleS type 1 subfamily. In terms of assembly, monomer. It depends on Zn(2+) as a cofactor.

The protein localises to the cytoplasm. The catalysed reaction is tRNA(Ile) + L-isoleucine + ATP = L-isoleucyl-tRNA(Ile) + AMP + diphosphate. Functionally, catalyzes the attachment of isoleucine to tRNA(Ile). As IleRS can inadvertently accommodate and process structurally similar amino acids such as valine, to avoid such errors it has two additional distinct tRNA(Ile)-dependent editing activities. One activity is designated as 'pretransfer' editing and involves the hydrolysis of activated Val-AMP. The other activity is designated 'posttransfer' editing and involves deacylation of mischarged Val-tRNA(Ile). Its function is as follows. Confers resistance to the antibiotic mupirocin (pseudomonic acid A), an Ile-analog produced by P.fluorescens NCIMB 10586 itself that competitively inhibits activation by Ile-tRNA synthetase, thus inhibiting protein biosynthesis. This chain is Isoleucine--tRNA ligase 1 (ileS1), found in Pseudomonas fluorescens.